Here is a 625-residue protein sequence, read N- to C-terminus: 1-deoxy-D-xylulose-5-phosphate synthase (625 aa).

Residues His-80 and Gly-121–Ser-123 contribute to the thiamine diphosphate site. Position 152 (Asp-152) interacts with Mg(2+). Residues Gly-153–Ala-154, Asn-181, Tyr-290, and Glu-371 each bind thiamine diphosphate. Asn-181 lines the Mg(2+) pocket.

This sequence belongs to the transketolase family. DXPS subfamily. As to quaternary structure, homodimer. Requires Mg(2+) as cofactor. Thiamine diphosphate serves as cofactor.

It carries out the reaction D-glyceraldehyde 3-phosphate + pyruvate + H(+) = 1-deoxy-D-xylulose 5-phosphate + CO2. The protein operates within metabolic intermediate biosynthesis; 1-deoxy-D-xylulose 5-phosphate biosynthesis; 1-deoxy-D-xylulose 5-phosphate from D-glyceraldehyde 3-phosphate and pyruvate: step 1/1. Functionally, catalyzes the acyloin condensation reaction between C atoms 2 and 3 of pyruvate and glyceraldehyde 3-phosphate to yield 1-deoxy-D-xylulose-5-phosphate (DXP). The polypeptide is 1-deoxy-D-xylulose-5-phosphate synthase (Haemophilus influenzae (strain ATCC 51907 / DSM 11121 / KW20 / Rd)).